The primary structure comprises 154 residues: Large ribosomal subunit protein uL13 (154 aa).

It belongs to the universal ribosomal protein uL13 family. As to quaternary structure, part of the 50S ribosomal subunit.

This protein is one of the early assembly proteins of the 50S ribosomal subunit, although it is not seen to bind rRNA by itself. It is important during the early stages of 50S assembly. The polypeptide is Large ribosomal subunit protein uL13 (Agrobacterium fabrum (strain C58 / ATCC 33970) (Agrobacterium tumefaciens (strain C58))).